The primary structure comprises 580 residues: Laccase-20 (580 aa).

The first 23 residues, M1–A23, serve as a signal peptide directing secretion. Plastocyanin-like domains are found at residues V31–G147 and K156–V310. N-linked (GlcNAc...) asparagine glycosylation is found at N36 and N42. Residues H81 and H83 each coordinate Cu cation. An N-linked (GlcNAc...) asparagine glycan is attached at N115. Residues H126 and H128 each contribute to the Cu cation site. N-linked (GlcNAc...) asparagine glycans are attached at residues N200, N339, N373, N392, N399, N429, and N460. The region spanning D419–P561 is the Plastocyanin-like 3 domain. Positions 478, 481, 483, 540, 541, 542, 546, and 551 each coordinate Cu cation. The tract at residues G560–S580 is disordered.

It belongs to the multicopper oxidase family. It depends on Cu cation as a cofactor.

It is found in the secreted. It localises to the extracellular space. The protein localises to the apoplast. It carries out the reaction 4 hydroquinone + O2 = 4 benzosemiquinone + 2 H2O. Lignin degradation and detoxification of lignin-derived products. The sequence is that of Laccase-20 (LAC20) from Oryza sativa subsp. japonica (Rice).